The primary structure comprises 484 residues: Monocarboxylate transporter 2 (484 aa).

Residues 1–16 are Cytoplasmic-facing; it reads MPAPTAVPPPHPLPPD. A helical transmembrane segment spans residues 17-37; it reads GGWGWVVVGASFISIGFSYAF. The Extracellular segment spans residues 38-60; that stretch reads PKSVTVFFKDIQEIFRAGHSKVA. The chain crosses the membrane as a helical span at residues 61-81; it reads WISSIMLAVMYAGGPISSVLV. The Cytoplasmic portion of the chain corresponds to 82–87; it reads NKYGSR. A helical membrane pass occupies residues 88–108; that stretch reads PVVVIGGLLCCTGMILASFST. At 109–116 the chain is on the extracellular side; the sequence is SMIQLYLT. Residues 117–137 form a helical membrane-spanning segment; that stretch reads IGFISGLGLAFNLQPALTILG. Topologically, residues 138–144 are cytoplasmic; it reads KYFYRRR. The chain crosses the membrane as a helical span at residues 145–165; it reads PLASGLAMTGSPVFLSSLAPF. The Extracellular portion of the chain corresponds to 166-174; sequence NQYLFNSYG. Residues 175 to 195 traverse the membrane as a helical segment; that stretch reads LKGSFLILGGIFLHSCVAGSL. At 196–245 the chain is on the cytoplasmic side; sequence MRPVGTSQQSPKSKSKVSSRHDSSTKKAPKLTLAQRINMFLDFSLFKHRG. The segment at 198-223 is disordered; sequence PVGTSQQSPKSKSKVSSRHDSSTKKA. The helical transmembrane segment at 246 to 266 threads the bilayer; the sequence is FLIYLSGNVIMFLGFFAPVIF. The Extracellular segment spans residues 267–281; the sequence is LSPYAKNRGVDDYKA. Residues 282 to 302 form a helical membrane-spanning segment; it reads AYLLSVMAFVDMFSRPCGGLI. The Cytoplasmic segment spans residues 303 to 311; sequence ANTRLVRPR. A helical membrane pass occupies residues 312 to 332; sequence IQYFFSLAIVFTGVCHLLCPL. The Extracellular segment spans residues 333–337; sequence AESYT. Residues 338–358 form a helical membrane-spanning segment; that stretch reads ALVVYAIFFGYGFGSVSSILF. At 359-372 the chain is on the cytoplasmic side; sequence ETLMDLVGPARFSS. The helical transmembrane segment at 373-393 threads the bilayer; that stretch reads AVGLVTIVECCPVLLGPPLAG. The Extracellular segment spans residues 394–405; it reads KLVDETGEHKYL. Residues 406–426 form a helical membrane-spanning segment; it reads FVASGAIVVLAGIWLFIGNAI. The Cytoplasmic portion of the chain corresponds to 427-484; it reads NYRLLAKERKREKARKKKSPNRHSKELESLSKSNQDDVAVRVPQAHRSPSDKERESNI. A disordered region spans residues 437 to 484; it reads REKARKKKSPNRHSKELESLSKSNQDDVAVRVPQAHRSPSDKERESNI. A compositionally biased stretch (basic residues) spans 438–448; it reads EKARKKKSPNR. 2 stretches are compositionally biased toward basic and acidic residues: residues 449 to 465 and 474 to 484; these read HSKE…DDVA and SPSDKERESNI.

The protein belongs to the major facilitator superfamily. Monocarboxylate porter (TC 2.A.1.13) family. As to quaternary structure, homodimer. Interacts with GRID2IP. Interacts with EMB; interaction mediates SLC16A7 targeting to the plasma membrane. Interacts with isoform 2 of BSG.

It is found in the cell membrane. It localises to the basolateral cell membrane. The protein resides in the cytoplasm. It carries out the reaction 3-methyl-2-oxobutanoate(out) + H(+)(out) = 3-methyl-2-oxobutanoate(in) + H(+)(in). It catalyses the reaction (S)-lactate(in) + H(+)(in) = (S)-lactate(out) + H(+)(out). The catalysed reaction is acetoacetate(out) + H(+)(out) = acetoacetate(in) + H(+)(in). The enzyme catalyses (R)-3-hydroxybutanoate(out) + H(+)(out) = (R)-3-hydroxybutanoate(in) + H(+)(in). It carries out the reaction 4-methyl-2-oxopentanoate(out) + H(+)(out) = 4-methyl-2-oxopentanoate(in) + H(+)(in). It catalyses the reaction pyruvate(out) + H(+)(out) = pyruvate(in) + H(+)(in). The catalysed reaction is (S)-3-hydroxybutanoate(out) + H(+)(out) = (S)-3-hydroxybutanoate(in) + H(+)(in). With respect to regulation, transport activity exhibits steep dependence on substrate concentration. Substrate concentration sensitivity of SLC16A7 arises from the strong inter-subunit cooperativity of the SLC16A7 dimer during transport. Inhibited by AR-C155858. Its function is as follows. Proton-coupled monocarboxylate symporter. Catalyzes the rapid transport across the plasma membrane of monocarboxylates such as L-lactate, pyruvate and ketone bodies, acetoacetate, beta-hydroxybutyrate and acetate. Dimerization is functionally required and both subunits work cooperatively in transporting substrate. This is Monocarboxylate transporter 2 (SLC16A7) from Meriones unguiculatus (Mongolian jird).